Reading from the N-terminus, the 326-residue chain is 4-hydroxythreonine-4-phosphate dehydrogenase (326 aa).

T132 provides a ligand contact to substrate. Residues H160, H205, and H260 each coordinate a divalent metal cation. Positions 268, 277, and 286 each coordinate substrate.

This sequence belongs to the PdxA family. As to quaternary structure, homodimer. It depends on Zn(2+) as a cofactor. Mg(2+) is required as a cofactor. The cofactor is Co(2+).

Its subcellular location is the cytoplasm. It carries out the reaction 4-(phosphooxy)-L-threonine + NAD(+) = 3-amino-2-oxopropyl phosphate + CO2 + NADH. The protein operates within cofactor biosynthesis; pyridoxine 5'-phosphate biosynthesis; pyridoxine 5'-phosphate from D-erythrose 4-phosphate: step 4/5. Functionally, catalyzes the NAD(P)-dependent oxidation of 4-(phosphooxy)-L-threonine (HTP) into 2-amino-3-oxo-4-(phosphooxy)butyric acid which spontaneously decarboxylates to form 3-amino-2-oxopropyl phosphate (AHAP). The protein is 4-hydroxythreonine-4-phosphate dehydrogenase of Stenotrophomonas maltophilia (strain K279a).